Here is a 176-residue protein sequence, read N- to C-terminus: MEELIAKRYAKALMESCSEKELQAIEDALVAIAALFRDWKVKEFIISPEVEKSAKEEILLAPFKDAGKKFVHLIKLLAEKDRLEIIPALANELKIQRALKERKFDGVVYSEFKLSDNELKKIAEALSKKVNGEVVLHQGKEPYDGIKVEVNTVGIEIEFSKSKIKKQLIENILKAI.

The protein belongs to the ATPase delta chain family. F-type ATPases have 2 components, F(1) - the catalytic core - and F(0) - the membrane proton channel. F(1) has five subunits: alpha(3), beta(3), gamma(1), delta(1), epsilon(1). F(0) has three main subunits: a(1), b(2) and c(10-14). The alpha and beta chains form an alternating ring which encloses part of the gamma chain. F(1) is attached to F(0) by a central stalk formed by the gamma and epsilon chains, while a peripheral stalk is formed by the delta and b chains.

Its subcellular location is the cell inner membrane. In terms of biological role, f(1)F(0) ATP synthase produces ATP from ADP in the presence of a proton or sodium gradient. F-type ATPases consist of two structural domains, F(1) containing the extramembraneous catalytic core and F(0) containing the membrane proton channel, linked together by a central stalk and a peripheral stalk. During catalysis, ATP synthesis in the catalytic domain of F(1) is coupled via a rotary mechanism of the central stalk subunits to proton translocation. This protein is part of the stalk that links CF(0) to CF(1). It either transmits conformational changes from CF(0) to CF(1) or is implicated in proton conduction. This is ATP synthase subunit delta from Nitratiruptor sp. (strain SB155-2).